We begin with the raw amino-acid sequence, 156 residues long: D-aminoacyl-tRNA deacylase (156 aa).

The Gly-cisPro motif, important for rejection of L-amino acids motif lies at 142-143 (GP).

This sequence belongs to the DTD family. In terms of assembly, homodimer.

It localises to the cytoplasm. The enzyme catalyses glycyl-tRNA(Ala) + H2O = tRNA(Ala) + glycine + H(+). It carries out the reaction a D-aminoacyl-tRNA + H2O = a tRNA + a D-alpha-amino acid + H(+). Its function is as follows. An aminoacyl-tRNA editing enzyme that deacylates mischarged D-aminoacyl-tRNAs. Also deacylates mischarged glycyl-tRNA(Ala), protecting cells against glycine mischarging by AlaRS. Acts via tRNA-based rather than protein-based catalysis; rejects L-amino acids rather than detecting D-amino acids in the active site. By recycling D-aminoacyl-tRNA to D-amino acids and free tRNA molecules, this enzyme counteracts the toxicity associated with the formation of D-aminoacyl-tRNA entities in vivo and helps enforce protein L-homochirality. This chain is D-aminoacyl-tRNA deacylase, found in Cupriavidus pinatubonensis (strain JMP 134 / LMG 1197) (Cupriavidus necator (strain JMP 134)).